We begin with the raw amino-acid sequence, 119 residues long: Beta-2-microglobulin (119 aa).

Residues 1 to 20 form the signal peptide; that stretch reads MARFVVVALLALLSLSGLEA. The Ig-like C1-type domain maps to 25–114; it reads PKIQVYSRHP…VTFPTPKTVK (90 aa). A disulfide bridge links C45 with C100.

The protein belongs to the beta-2-microglobulin family. As to quaternary structure, heterodimer of an alpha chain and a beta chain. Beta-2-microglobulin is the beta-chain of major histocompatibility complex class I molecules.

The protein localises to the secreted. Its function is as follows. Component of the class I major histocompatibility complex (MHC). Involved in the presentation of peptide antigens to the immune system. This Alouatta seniculus (Red howler monkey) protein is Beta-2-microglobulin (B2M).